Reading from the N-terminus, the 832-residue chain is FAST kinase domain-containing protein 1, mitochondrial (832 aa).

One can recognise an RAP domain in the interval 765–825 (VAIEFLDSKA…KDAWIDYLRK (61 aa)).

The protein belongs to the FAST kinase family.

It is found in the mitochondrion. May regulate the stability of some mitochondrial mRNA species. The polypeptide is FAST kinase domain-containing protein 1, mitochondrial (fastkd1) (Xenopus tropicalis (Western clawed frog)).